The following is a 115-amino-acid chain: uncharacterized protein (115 aa).

Residues 90 to 100 (THFGRPATRRR) are compositionally biased toward basic residues. Residues 90 to 115 (THFGRPATRRRPLGEREVNPSARSLG) form a disordered region.

This is an uncharacterized protein from Saccharomyces cerevisiae (strain ATCC 204508 / S288c) (Baker's yeast).